The primary structure comprises 406 residues: MNAHEIKKLFPVLDQEVNGSPLVYLDSAATSQKPIAVIEALDDYYRRYNSNVHRGVHTLGTLATDGYEGAREKIRRFIHASSTEEIIFTRGTTTAINLVAASYGRANLGEGDEIVITPMEHHSNIIPWQQVAKATGATLTYLPLQKDGTIKIEDVEKTISEKTKIVAIMHVSNVLGTINPVKEIAEIAHRHGAIMLVDGAQSAPHMKIDVQELGCDFFAFSGHKMAGPTGIGVLYGKKAHLEKMEPVEFGGEMIDFVGLYDSTWKELPWKFEGGTPIIAGAIGLGAAIDFLEDIGLDEIEKHEHELAQYALDRLSELEGMTVYGPQKRAGLVTFNIEDVHPHDVATVLDADGIAVRAGHHCAQPLMKWLDVTATARASFYLYNTKEDIDALAKGLEKTKEYFGHVF.

Lys-224 carries the N6-(pyridoxal phosphate)lysine modification. Cys-361 acts as the Cysteine persulfide intermediate in catalysis.

The protein belongs to the class-V pyridoxal-phosphate-dependent aminotransferase family. Csd subfamily. Pyridoxal 5'-phosphate is required as a cofactor.

It catalyses the reaction (sulfur carrier)-H + L-cysteine = (sulfur carrier)-SH + L-alanine. Its function is as follows. Catalyzes the removal of elemental sulfur and selenium atoms from L-cysteine, L-cystine, L-selenocysteine, and L-selenocystine to produce L-alanine. In Halalkalibacterium halodurans (strain ATCC BAA-125 / DSM 18197 / FERM 7344 / JCM 9153 / C-125) (Bacillus halodurans), this protein is Probable cysteine desulfurase (csd).